We begin with the raw amino-acid sequence, 371 residues long: uncharacterized protein (371 aa).

A helical membrane pass occupies residues 17-33; that stretch reads FLLFSVVLIIVMTTLVF.

This sequence to S.pombe SpBC4C3.08 and SpBC4C3.09.

It is found in the membrane. This is an uncharacterized protein from Schizosaccharomyces pombe (strain 972 / ATCC 24843) (Fission yeast).